A 623-amino-acid polypeptide reads, in one-letter code: Glutamine--fructose-6-phosphate aminotransferase [isomerizing] (623 aa).

C2 (nucleophile; for GATase activity) is an active-site residue. In terms of domain architecture, Glutamine amidotransferase type-2 spans 2–228; the sequence is CGIVGYIGQA…NDQVVTITAD (227 aa). SIS domains are found at residues 295 to 435 and 468 to 613; these read IDES…LRGN and LGRS…VDQP. The active-site For Fru-6P isomerization activity is the K618.

As to quaternary structure, homodimer.

It localises to the cytoplasm. The catalysed reaction is D-fructose 6-phosphate + L-glutamine = D-glucosamine 6-phosphate + L-glutamate. Functionally, catalyzes the first step in hexosamine metabolism, converting fructose-6P into glucosamine-6P using glutamine as a nitrogen source. The chain is Glutamine--fructose-6-phosphate aminotransferase [isomerizing] from Corynebacterium efficiens (strain DSM 44549 / YS-314 / AJ 12310 / JCM 11189 / NBRC 100395).